A 428-amino-acid chain; its full sequence is Aerobic C4-dicarboxylate transport protein (428 aa).

9 helical membrane-spanning segments follow: residues 5–27, 47–64, 77–99, 141–163, 184–206, 216–238, 289–311, 326–348, and 353–375; these read LFKS…GHYY, MIIA…IAGM, ALLY…VNVV, VIGA…FGFA, VIFG…AMAF, LVQL…VVVL, VVGL…YLTM, IFHQ…GVTG, and VLAA…ILGI.

Belongs to the dicarboxylate/amino acid:cation symporter (DAACS) (TC 2.A.23) family.

The protein resides in the cell inner membrane. Functionally, responsible for the transport of dicarboxylates such as succinate, fumarate, and malate from the periplasm across the inner membrane. This is Aerobic C4-dicarboxylate transport protein (dctA) from Salmonella typhimurium (strain LT2 / SGSC1412 / ATCC 700720).